Here is a 539-residue protein sequence, read N- to C-terminus: G protein-coupled receptor associated sorting protein 3 (539 aa).

Residues 1-10 are compositionally biased toward basic residues; the sequence is MTGSKNKARA. Disordered regions lie at residues 1 to 111 and 132 to 170; these read MTGS…DSWF and NSVAKCENKPSTSIQARVEEHTPRTSHKSRSGAEEEEEE. Composition is skewed to basic and acidic residues over residues 66–80 and 88–106; these read VVAETKEGARPESKA and FNHKAENKYARSARKDKPS. Residues 132 to 146 are compositionally biased toward polar residues; sequence NSVAKCENKPSTSIQ.

This sequence belongs to the GPRASP family. As to quaternary structure, homodimer.

Its subcellular location is the cytoplasm. It is found in the nucleus. Functionally, survival and differentiation promoting protein that plays a role in the regulation of neurosynaptogenesis. Induces phosphatase PP2A activity which results in APP dephosphorylation and inhibits BACE1-mediated processing of APP. This Rattus norvegicus (Rat) protein is G protein-coupled receptor associated sorting protein 3 (Gprasp3).